A 431-amino-acid polypeptide reads, in one-letter code: Gamma-glutamyl phosphate reductase (431 aa).

It belongs to the gamma-glutamyl phosphate reductase family.

It localises to the cytoplasm. It catalyses the reaction L-glutamate 5-semialdehyde + phosphate + NADP(+) = L-glutamyl 5-phosphate + NADPH + H(+). The protein operates within amino-acid biosynthesis; L-proline biosynthesis; L-glutamate 5-semialdehyde from L-glutamate: step 2/2. Functionally, catalyzes the NADPH-dependent reduction of L-glutamate 5-phosphate into L-glutamate 5-semialdehyde and phosphate. The product spontaneously undergoes cyclization to form 1-pyrroline-5-carboxylate. This is Gamma-glutamyl phosphate reductase from Bifidobacterium longum subsp. infantis (strain ATCC 15697 / DSM 20088 / JCM 1222 / NCTC 11817 / S12).